We begin with the raw amino-acid sequence, 157 residues long: Protein EOLA1 (157 aa).

The region spanning 6–92 is the ASCH domain; the sequence is LSFRQPYAGL…IAGLIDIGET (87 aa).

Belongs to the EOLA family. In terms of assembly, interacts with MT2A.

Its function is as follows. May play a role in cell protection during the inflammatory response. In epithelial cells, negatively regulates IL6 production and apoptosis through the regulation of MT2A expression. This is Protein EOLA1 from Mus musculus (Mouse).